The primary structure comprises 432 residues: Enolase (432 aa).

Gln167 contributes to the (2R)-2-phosphoglycerate binding site. Residue Glu209 is the Proton donor of the active site. Residues Asp246, Glu291, and Asp318 each contribute to the Mg(2+) site. (2R)-2-phosphoglycerate contacts are provided by Lys343, Arg372, Ser373, and Lys394. The active-site Proton acceptor is Lys343.

Belongs to the enolase family. Component of the RNA degradosome, a multiprotein complex involved in RNA processing and mRNA degradation. Requires Mg(2+) as cofactor.

It is found in the cytoplasm. Its subcellular location is the secreted. The protein localises to the cell surface. The catalysed reaction is (2R)-2-phosphoglycerate = phosphoenolpyruvate + H2O. It functions in the pathway carbohydrate degradation; glycolysis; pyruvate from D-glyceraldehyde 3-phosphate: step 4/5. Functionally, catalyzes the reversible conversion of 2-phosphoglycerate (2-PG) into phosphoenolpyruvate (PEP). It is essential for the degradation of carbohydrates via glycolysis. The sequence is that of Enolase from Aliivibrio fischeri (strain ATCC 700601 / ES114) (Vibrio fischeri).